A 253-amino-acid chain; its full sequence is Kojic acid related protein 1 (253 aa).

The next 3 membrane-spanning stretches (helical) occupy residues 23–43, 53–73, and 117–137; these read PIKF…FILI, IFYP…YIVS, and ALFG…IVSV. The interval 174-253 is disordered; sequence FPMMSPALPS…PPPPKKAAKV (80 aa). 2 stretches are compositionally biased toward polar residues: residues 184–200 and 226–240; these read GGTT…SPEF and QQES…NQPQ. A compositionally biased stretch (pro residues) spans 242-253; that stretch reads YFPPPPKKAAKV.

Its subcellular location is the membrane. Functionally, involved in mycelium growth and repression of conidia formation by affecting the expression of brlA and abaA. Acts as a negative regulation factor for kojic acid production through affecting the expression of kojA, kojR and kojT. This Aspergillus oryzae (strain ATCC 42149 / RIB 40) (Yellow koji mold) protein is Kojic acid related protein 1.